A 277-amino-acid polypeptide reads, in one-letter code: Thymidylate synthase (277 aa).

Arginine 21 provides a ligand contact to dUMP. (6R)-5,10-methylene-5,6,7,8-tetrahydrofolate is bound at residue histidine 51. Residue 126 to 127 (RR) participates in dUMP binding. The active-site Nucleophile is cysteine 159. DUMP is bound by residues 179–182 (RSAD), asparagine 190, and 220–222 (HLY). Aspartate 182 is a (6R)-5,10-methylene-5,6,7,8-tetrahydrofolate binding site. Serine 276 contributes to the (6R)-5,10-methylene-5,6,7,8-tetrahydrofolate binding site.

It belongs to the thymidylate synthase family. Bacterial-type ThyA subfamily. In terms of assembly, homodimer.

The protein resides in the cytoplasm. It catalyses the reaction dUMP + (6R)-5,10-methylene-5,6,7,8-tetrahydrofolate = 7,8-dihydrofolate + dTMP. The protein operates within pyrimidine metabolism; dTTP biosynthesis. In terms of biological role, catalyzes the reductive methylation of 2'-deoxyuridine-5'-monophosphate (dUMP) to 2'-deoxythymidine-5'-monophosphate (dTMP) while utilizing 5,10-methylenetetrahydrofolate (mTHF) as the methyl donor and reductant in the reaction, yielding dihydrofolate (DHF) as a by-product. This enzymatic reaction provides an intracellular de novo source of dTMP, an essential precursor for DNA biosynthesis. This Saccharophagus degradans (strain 2-40 / ATCC 43961 / DSM 17024) protein is Thymidylate synthase.